The primary structure comprises 70 residues: Putative membrane protein insertion efficiency factor (70 aa).

The protein belongs to the UPF0161 family.

Its subcellular location is the cell inner membrane. Functionally, could be involved in insertion of integral membrane proteins into the membrane. This chain is Putative membrane protein insertion efficiency factor, found in Francisella tularensis subsp. tularensis (strain SCHU S4 / Schu 4).